The sequence spans 217 residues: Somatotropin (217 aa).

Residues 1–26 (MMAAGPRTSLLLAFALLCLPWTQVVG) form the signal peptide. Residue His-46 participates in Zn(2+) binding. Cys-79 and Cys-190 are joined by a disulfide. Ser-132 is modified (phosphoserine). Glu-199 serves as a coordination point for Zn(2+). Residues Cys-207 and Cys-215 are joined by a disulfide bond.

Belongs to the somatotropin/prolactin family.

It localises to the secreted. In terms of biological role, plays an important role in growth control. Its major role in stimulating body growth is to stimulate the liver and other tissues to secrete IGF1. It stimulates both the differentiation and proliferation of myoblasts. It also stimulates amino acid uptake and protein synthesis in muscle and other tissues. The chain is Somatotropin (GH1) from Bos taurus (Bovine).